Consider the following 332-residue polypeptide: L-lactate dehydrogenase A chain (332 aa).

NAD(+) contacts are provided by residues 29 to 57 and R99; that span reads GAVGMACAISILMKDLADELALVDVVEDK. Substrate-binding residues include R106, N138, and R169. Residue N138 coordinates NAD(+). The active-site Proton acceptor is the H193. T248 contacts substrate.

This sequence belongs to the LDH/MDH superfamily. LDH family. Homotetramer.

It localises to the cytoplasm. The catalysed reaction is (S)-lactate + NAD(+) = pyruvate + NADH + H(+). Its pathway is fermentation; pyruvate fermentation to lactate; (S)-lactate from pyruvate: step 1/1. Interconverts simultaneously and stereospecifically pyruvate and lactate with concomitant interconversion of NADH and NAD(+). This chain is L-lactate dehydrogenase A chain (LDHA), found in Python regius (Ball python).